A 269-amino-acid chain; its full sequence is Thymidylate synthase (269 aa).

Residue Arg26 participates in dUMP binding. His56 contacts (6R)-5,10-methylene-5,6,7,8-tetrahydrofolate. 131–132 (RR) contributes to the dUMP binding site. Catalysis depends on Cys151, which acts as the Nucleophile. Residues 171-174 (RSAD), Asn182, and 212-214 (HIY) contribute to the dUMP site. Asp174 contributes to the (6R)-5,10-methylene-5,6,7,8-tetrahydrofolate binding site. Residue Ala268 participates in (6R)-5,10-methylene-5,6,7,8-tetrahydrofolate binding.

This sequence belongs to the thymidylate synthase family. Bacterial-type ThyA subfamily. In terms of assembly, homodimer.

The protein localises to the cytoplasm. It carries out the reaction dUMP + (6R)-5,10-methylene-5,6,7,8-tetrahydrofolate = 7,8-dihydrofolate + dTMP. Its pathway is pyrimidine metabolism; dTTP biosynthesis. Functionally, catalyzes the reductive methylation of 2'-deoxyuridine-5'-monophosphate (dUMP) to 2'-deoxythymidine-5'-monophosphate (dTMP) while utilizing 5,10-methylenetetrahydrofolate (mTHF) as the methyl donor and reductant in the reaction, yielding dihydrofolate (DHF) as a by-product. This enzymatic reaction provides an intracellular de novo source of dTMP, an essential precursor for DNA biosynthesis. This chain is Thymidylate synthase, found in Leifsonia xyli subsp. xyli (strain CTCB07).